A 373-amino-acid polypeptide reads, in one-letter code: Queuine tRNA-ribosyltransferase (373 aa).

Catalysis depends on Asp90, which acts as the Proton acceptor. Substrate is bound by residues 90 to 94, Asp144, Gln193, and Gly220; that span reads DSGGF. The segment at 251 to 257 is RNA binding; it reads GVGTPED. Catalysis depends on Asp270, which acts as the Nucleophile. The RNA binding; important for wobble base 34 recognition stretch occupies residues 275–279; that stretch reads TRNAR. Zn(2+)-binding residues include Cys308, Cys310, Cys313, and His339.

This sequence belongs to the queuine tRNA-ribosyltransferase family. In terms of assembly, homodimer. Within each dimer, one monomer is responsible for RNA recognition and catalysis, while the other monomer binds to the replacement base PreQ1. It depends on Zn(2+) as a cofactor.

It carries out the reaction 7-aminomethyl-7-carbaguanine + guanosine(34) in tRNA = 7-aminomethyl-7-carbaguanosine(34) in tRNA + guanine. The protein operates within tRNA modification; tRNA-queuosine biosynthesis. In terms of biological role, catalyzes the base-exchange of a guanine (G) residue with the queuine precursor 7-aminomethyl-7-deazaguanine (PreQ1) at position 34 (anticodon wobble position) in tRNAs with GU(N) anticodons (tRNA-Asp, -Asn, -His and -Tyr). Catalysis occurs through a double-displacement mechanism. The nucleophile active site attacks the C1' of nucleotide 34 to detach the guanine base from the RNA, forming a covalent enzyme-RNA intermediate. The proton acceptor active site deprotonates the incoming PreQ1, allowing a nucleophilic attack on the C1' of the ribose to form the product. After dissociation, two additional enzymatic reactions on the tRNA convert PreQ1 to queuine (Q), resulting in the hypermodified nucleoside queuosine (7-(((4,5-cis-dihydroxy-2-cyclopenten-1-yl)amino)methyl)-7-deazaguanosine). The protein is Queuine tRNA-ribosyltransferase of Campylobacter jejuni subsp. doylei (strain ATCC BAA-1458 / RM4099 / 269.97).